The primary structure comprises 271 residues: Ribosomal RNA small subunit methyltransferase A (271 aa).

S-adenosyl-L-methionine contacts are provided by His11, Leu13, Gly38, Glu58, Asp86, and Asn101.

This sequence belongs to the class I-like SAM-binding methyltransferase superfamily. rRNA adenine N(6)-methyltransferase family. RsmA subfamily.

The protein localises to the cytoplasm. The catalysed reaction is adenosine(1518)/adenosine(1519) in 16S rRNA + 4 S-adenosyl-L-methionine = N(6)-dimethyladenosine(1518)/N(6)-dimethyladenosine(1519) in 16S rRNA + 4 S-adenosyl-L-homocysteine + 4 H(+). Its function is as follows. Specifically dimethylates two adjacent adenosines (A1518 and A1519) in the loop of a conserved hairpin near the 3'-end of 16S rRNA in the 30S particle. May play a critical role in biogenesis of 30S subunits. In Helicobacter pylori (strain G27), this protein is Ribosomal RNA small subunit methyltransferase A.